The chain runs to 382 residues: Galactokinase (382 aa).

A substrate-binding site is contributed by 34 to 37 (EHTD). 124-130 (GAGLSSS) is a binding site for ATP. Mg(2+) is bound by residues serine 130 and glutamate 162. The active-site Proton acceptor is the aspartate 174. Tyrosine 223 is a binding site for substrate.

Belongs to the GHMP kinase family. GalK subfamily.

The protein localises to the cytoplasm. It carries out the reaction alpha-D-galactose + ATP = alpha-D-galactose 1-phosphate + ADP + H(+). Its pathway is carbohydrate metabolism; galactose metabolism. Functionally, catalyzes the transfer of the gamma-phosphate of ATP to D-galactose to form alpha-D-galactose-1-phosphate (Gal-1-P). The sequence is that of Galactokinase from Escherichia coli O157:H7 (strain EC4115 / EHEC).